Consider the following 109-residue polypeptide: Large ribosomal subunit protein uL22 (109 aa).

It belongs to the universal ribosomal protein uL22 family. As to quaternary structure, part of the 50S ribosomal subunit.

In terms of biological role, this protein binds specifically to 23S rRNA; its binding is stimulated by other ribosomal proteins, e.g. L4, L17, and L20. It is important during the early stages of 50S assembly. It makes multiple contacts with different domains of the 23S rRNA in the assembled 50S subunit and ribosome. Its function is as follows. The globular domain of the protein is located near the polypeptide exit tunnel on the outside of the subunit, while an extended beta-hairpin is found that lines the wall of the exit tunnel in the center of the 70S ribosome. In Blochmanniella pennsylvanica (strain BPEN), this protein is Large ribosomal subunit protein uL22.